The primary structure comprises 360 residues: UDP-N-acetylglucosamine--N-acetylmuramyl-(pentapeptide) pyrophosphoryl-undecaprenol N-acetylglucosamine transferase (360 aa).

Residues 16 to 18 (TGG), asparagine 128, arginine 165, serine 191, isoleucine 247, 266 to 271 (ALTVSE), and glutamine 292 contribute to the UDP-N-acetyl-alpha-D-glucosamine site.

It belongs to the glycosyltransferase 28 family. MurG subfamily.

It is found in the cell inner membrane. It catalyses the reaction di-trans,octa-cis-undecaprenyl diphospho-N-acetyl-alpha-D-muramoyl-L-alanyl-D-glutamyl-meso-2,6-diaminopimeloyl-D-alanyl-D-alanine + UDP-N-acetyl-alpha-D-glucosamine = di-trans,octa-cis-undecaprenyl diphospho-[N-acetyl-alpha-D-glucosaminyl-(1-&gt;4)]-N-acetyl-alpha-D-muramoyl-L-alanyl-D-glutamyl-meso-2,6-diaminopimeloyl-D-alanyl-D-alanine + UDP + H(+). It functions in the pathway cell wall biogenesis; peptidoglycan biosynthesis. In terms of biological role, cell wall formation. Catalyzes the transfer of a GlcNAc subunit on undecaprenyl-pyrophosphoryl-MurNAc-pentapeptide (lipid intermediate I) to form undecaprenyl-pyrophosphoryl-MurNAc-(pentapeptide)GlcNAc (lipid intermediate II). The protein is UDP-N-acetylglucosamine--N-acetylmuramyl-(pentapeptide) pyrophosphoryl-undecaprenol N-acetylglucosamine transferase of Shewanella amazonensis (strain ATCC BAA-1098 / SB2B).